The chain runs to 165 residues: Putative pre-16S rRNA nuclease (165 aa).

This sequence belongs to the YqgF nuclease family.

Its subcellular location is the cytoplasm. Its function is as follows. Could be a nuclease involved in processing of the 5'-end of pre-16S rRNA. In Sinorhizobium medicae (strain WSM419) (Ensifer medicae), this protein is Putative pre-16S rRNA nuclease.